A 144-amino-acid polypeptide reads, in one-letter code: MKAQWCRPVAMDLGVYQLRHFSISFLSSLLGTENASVRLDNSSSGASVVAIDNKIEQAMDLVKSHLMYAVREEVEVLKEQIKELIEKNSQLEQENNLLKTLASPEQLAQFQAQLQTGSPPATTQPQGSTQPPAQPASQGSGPTA.

Residues L77–L98 form a leucine-zipper region. The segment at Q109–A144 is disordered.

It belongs to the TSC-22/Dip/Bun family. Forms homodimers. Forms a heterodimer with TSC22D4/THG1. Interacts with histone H1-2. Interacts with GNL3.

Its subcellular location is the cytoplasm. The protein localises to the nucleus. The protein resides in the mitochondrion. In terms of biological role, transcriptional repressor. Plays a role in the repression of hematopoietic precursor cell growth. Promotes IL2 deprivation-induced apoptosis in T-lymphocytes, via repression of TSC22D3/GILZ transcription and activation of the caspase cascade. Positively regulates cell death in response to TGFB3 during mammary gland involution. The sequence is that of TSC22 domain family protein 1 from Bathyergus suillus (Cape dune mole rat).